The primary structure comprises 488 residues: Retinoic acid receptor RXR-alpha (488 aa).

Residues 1-160 are modulating; the sequence is MSSAAMDTKH…GAMASFTKHI (160 aa). Lys134 participates in a covalent cross-link: Glycyl lysine isopeptide (Lys-Gly) (interchain with G-Cter in SUMO). The segment at residues 158 to 233 is a DNA-binding region (nuclear receptor); that stretch reads KHICAICGDR…MGMKREAVQE (76 aa). Residues Cys161, Cys164, Cys178, and Cys181 each coordinate Zn(2+). The NR C4-type zinc-finger motif lies at 161-181; the sequence is CAICGDRSSGKHYGVYSCEGC. A nuclear localization signal region spans residues 186–191; that stretch reads KRTVRK. Residues Cys197, Cys203, Cys213, and Cys216 each contribute to the Zn(2+) site. The segment at 197–216 adopts an NR C4-type zinc-finger fold; that stretch reads CRDSKDCMIDKRQRNRCQYC. Residues 227-250 are hinge; it reads KREAVQEERQRGKERNENEVESSN. Basic and acidic residues predominate over residues 232–244; that stretch reads QEERQRGKERNEN. The disordered stretch occupies residues 232–256; it reads QEERQRGKERNENEVESSNSANEDM. The NR LBD domain occupies 253 to 484; that stretch reads NEDMPVEKIL…TFLMEMLEAP (232 aa). The 9-cis-retinoate site is built by Arg342 and Ala353. Residues Arg342 and Ala353 each coordinate all-trans-retinoate. The interval 374–394 is required for nuclear export; sequence RVLTELVSKMRDMQMDKTELG. Positions 473 to 484 are AF-2; that stretch reads IDTFLMEMLEAP.

Belongs to the nuclear hormone receptor family. NR2 subfamily. In terms of assembly, homodimer. Heterodimer; with a rar molecule. Binds DNA preferentially as a rar/rxr heterodimer. Interacts with coactivator ncoa3 and with senp6. Post-translationally, sumoylated on Lys-134; which negatively regulates transcriptional activity. Desumoylated specifically by SENP6.

It is found in the nucleus. Its function is as follows. Receptor for retinoic acid that acts as a transcription factor. Forms homo- or heterodimers with retinoic acid receptors (rars) and binds to target response elements in response to their ligands, all-trans or 9-cis retinoic acid, to regulate gene expression in various biological processes. The rar/rxr heterodimers bind to the retinoic acid response elements (RARE) composed of tandem 5'-AGGTCA-3' sites known as DR1-DR5 to regulate transcription. The high affinity ligand for rxrs is 9-cis retinoic acid. In the absence of ligand, the rar/rxr heterodimers associate with a multiprotein complex containing transcription corepressors that induce histone deacetylation, chromatin condensation and transcriptional suppression. On ligand binding, the corepressors dissociate from the receptors and coactivators are recruited leading to transcriptional activation. In Xenopus laevis (African clawed frog), this protein is Retinoic acid receptor RXR-alpha (rxra).